Here is a 214-residue protein sequence, read N- to C-terminus: DNA-directed RNA polymerase subunit alpha (214 aa).

This sequence belongs to the RNA polymerase alpha chain family. In plastids the minimal PEP RNA polymerase catalytic core is composed of four subunits: alpha, beta, beta', and beta''. When a (nuclear-encoded) sigma factor is associated with the core the holoenzyme is formed, which can initiate transcription.

It is found in the plastid. It localises to the chloroplast. It carries out the reaction RNA(n) + a ribonucleoside 5'-triphosphate = RNA(n+1) + diphosphate. In terms of biological role, DNA-dependent RNA polymerase catalyzes the transcription of DNA into RNA using the four ribonucleoside triphosphates as substrates. The chain is DNA-directed RNA polymerase subunit alpha (rpoA) from Euglena viridis (Cercaria viridis).